Consider the following 393-residue polypeptide: Probable acetyl-CoA acetyltransferase (393 aa).

The active-site Acyl-thioester intermediate is cysteine 88. Catalysis depends on proton acceptor residues histidine 349 and cysteine 379.

It belongs to the thiolase-like superfamily. Thiolase family.

The catalysed reaction is 2 acetyl-CoA = acetoacetyl-CoA + CoA. This Mycobacterium leprae (strain TN) protein is Probable acetyl-CoA acetyltransferase (fadA4).